A 134-amino-acid polypeptide reads, in one-letter code: Small ribosomal subunit protein uS11 (134 aa).

Belongs to the universal ribosomal protein uS11 family. Part of the 30S ribosomal subunit. Interacts with proteins S7 and S18. Binds to IF-3.

Functionally, located on the platform of the 30S subunit, it bridges several disparate RNA helices of the 16S rRNA. Forms part of the Shine-Dalgarno cleft in the 70S ribosome. The chain is Small ribosomal subunit protein uS11 from Paracidovorax citrulli (strain AAC00-1) (Acidovorax citrulli).